The chain runs to 401 residues: Heparan-sulfate 6-O-sulfotransferase 1 (401 aa).

The Cytoplasmic segment spans residues 1–4 (MVER). Residues 5–27 (ASKFVLVVAGSACFMLILYQYAG) traverse the membrane as a helical; Signal-anchor for type II membrane protein segment. At 28–401 (PGLSLGAPGG…DYMSHIIEKW (374 aa)) the chain is on the lumenal side. 3'-phosphoadenylyl sulfate is bound at residue 83-91 (HIQKTGGTT). Residues 113–114 (KK), Arg-130, Trp-135, and His-140 each bind substrate. Catalysis depends on His-140, which acts as the Proton acceptor. Arg-175 and Ser-183 together coordinate 3'-phosphoadenylyl sulfate. Positions 187 and 194 each coordinate substrate. N-linked (GlcNAc...) asparagine glycosylation occurs at Asn-254. Residue 307–309 (MQY) coordinates 3'-phosphoadenylyl sulfate. An N-linked (GlcNAc...) asparagine glycan is attached at Asn-310. Position 313–314 (313–314 (RA)) interacts with 3'-phosphoadenylyl sulfate. A disordered region spans residues 367–389 (ERLLHRSKEALPREDTEEPGRVP).

The protein belongs to the sulfotransferase 6 family. In terms of processing, N-glycosylated.

The protein resides in the membrane. It catalyses the reaction alpha-D-glucosaminyl-[heparan sulfate](n) + 3'-phosphoadenylyl sulfate = 6-sulfo-alpha-D-glucosaminyl-[heparan sulfate](n) + adenosine 3',5'-bisphosphate + H(+). Its activity is regulated as follows. Inhibited by dithiothreitol and stimulated by protamine. In terms of biological role, 6-O-sulfation enzyme which catalyzes the transfer of sulfate from 3'-phosphoadenosine 5'-phosphosulfate (PAPS) to position 6 of the N-sulfoglucosamine residue (GlcNS) of heparan sulfate. Also transfers sulfate to CDSNS-heparin and performs the crucial step modification in the biosynthesis of anticoagulant heparan sulfate (HSact). Critical for normal neuronal development where it may play a role in neuron branching. May also play a role in limb development. May prefer iduronic acid. The protein is Heparan-sulfate 6-O-sulfotransferase 1 of Cricetulus griseus (Chinese hamster).